The primary structure comprises 170 residues: RNA pyrophosphohydrolase (170 aa).

In terms of domain architecture, Nudix hydrolase spans 8–158 (PYRTCVGMML…KRPVYERVVK (151 aa)). A Nudix box motif is present at residues 46-67 (GGVDPGEDTWLAAKRELYEETS).

The protein belongs to the Nudix hydrolase family. RppH subfamily. It depends on a divalent metal cation as a cofactor.

Accelerates the degradation of transcripts by removing pyrophosphate from the 5'-end of triphosphorylated RNA, leading to a more labile monophosphorylated state that can stimulate subsequent ribonuclease cleavage. The chain is RNA pyrophosphohydrolase from Nitrobacter winogradskyi (strain ATCC 25391 / DSM 10237 / CIP 104748 / NCIMB 11846 / Nb-255).